Here is a 440-residue protein sequence, read N- to C-terminus: ATP-dependent protease ATPase subunit HslU (440 aa).

Residues Ile-18, 60 to 65 (GVGKTE), Asp-253, Glu-318, and Arg-390 each bind ATP.

This sequence belongs to the ClpX chaperone family. HslU subfamily. As to quaternary structure, a double ring-shaped homohexamer of HslV is capped on each side by a ring-shaped HslU homohexamer. The assembly of the HslU/HslV complex is dependent on binding of ATP.

It is found in the cytoplasm. Functionally, ATPase subunit of a proteasome-like degradation complex; this subunit has chaperone activity. The binding of ATP and its subsequent hydrolysis by HslU are essential for unfolding of protein substrates subsequently hydrolyzed by HslV. HslU recognizes the N-terminal part of its protein substrates and unfolds these before they are guided to HslV for hydrolysis. The sequence is that of ATP-dependent protease ATPase subunit HslU from Shewanella oneidensis (strain ATCC 700550 / JCM 31522 / CIP 106686 / LMG 19005 / NCIMB 14063 / MR-1).